Here is a 394-residue protein sequence, read N- to C-terminus: Chorismate synthase (394 aa).

Residue arginine 62 coordinates NADP(+). Residues 144 to 146, glycine 307, 322 to 326, and arginine 349 each bind FMN; these read RAS and KPTPT.

This sequence belongs to the chorismate synthase family. Homotetramer. The cofactor is FMNH2.

The catalysed reaction is 5-O-(1-carboxyvinyl)-3-phosphoshikimate = chorismate + phosphate. The protein operates within metabolic intermediate biosynthesis; chorismate biosynthesis; chorismate from D-erythrose 4-phosphate and phosphoenolpyruvate: step 7/7. Its function is as follows. Catalyzes the anti-1,4-elimination of the C-3 phosphate and the C-6 proR hydrogen from 5-enolpyruvylshikimate-3-phosphate (EPSP) to yield chorismate, which is the branch point compound that serves as the starting substrate for the three terminal pathways of aromatic amino acid biosynthesis. This reaction introduces a second double bond into the aromatic ring system. This chain is Chorismate synthase, found in Acetivibrio thermocellus (strain ATCC 27405 / DSM 1237 / JCM 9322 / NBRC 103400 / NCIMB 10682 / NRRL B-4536 / VPI 7372) (Clostridium thermocellum).